A 557-amino-acid polypeptide reads, in one-letter code: Suprabasin (557 aa).

A signal peptide spans 1-23 (MHLASLLSSCSLLLLLGALPGWA). Disordered regions lie at residues 150 to 175 (RFGQGAHHATGQAGKEAEKFGQGAHH), 422 to 441 (GQGAHHAAEQAGKQAGKVAQ), 464 to 490 (AAGQAGKEAEKLGQGVHHAAGQAGKQE), and 509 to 533 (NQLLNDGHPGGSTTQHGGAATTTLT). Over residues 153–175 (QGAHHATGQAGKEAEKFGQGAHH) the composition is skewed to low complexity. The span at 476 to 487 (GQGVHHAAGQAG) shows a compositional bias: low complexity.

The protein resides in the secreted. In Bos taurus (Bovine), this protein is Suprabasin (SBSN).